A 30-amino-acid chain; its full sequence is Cyclotide vdif-A (30 aa).

Positions 1–30 form a cross-link, cyclopeptide (Gly-Asn); the sequence is GIPCGESCVFIPCISSVVGCSCKSKVCYRN. Cystine bridges form between Cys4/Cys20, Cys8/Cys22, and Cys13/Cys27.

This sequence belongs to the cyclotide family. Bracelet subfamily. Post-translationally, this is a cyclic peptide.

Functionally, probably participates in a plant defense mechanism. The protein is Cyclotide vdif-A of Viola diffusa.